Reading from the N-terminus, the 354-residue chain is D-alanine--D-alanine ligase (354 aa).

In terms of domain architecture, ATP-grasp spans 140–344 (KRLLRDSGLS…ISTLLTRLIM (205 aa)). 170 to 225 (ADMFGLPFFVKPVNQGSSIGVAKVNDDYSFHSALDIAFFYSHKIIIESCIAGRELE) serves as a coordination point for ATP. Residues Asp-298, Glu-311, and Asn-313 each contribute to the Mg(2+) site.

It belongs to the D-alanine--D-alanine ligase family. Mg(2+) is required as a cofactor. Mn(2+) serves as cofactor.

It localises to the cytoplasm. It catalyses the reaction 2 D-alanine + ATP = D-alanyl-D-alanine + ADP + phosphate + H(+). Its pathway is cell wall biogenesis; peptidoglycan biosynthesis. Its function is as follows. Cell wall formation. This is D-alanine--D-alanine ligase from Blochmanniella floridana.